Here is an 881-residue protein sequence, read N- to C-terminus: Low-affinity phosphate transporter PHO90 (881 aa).

In terms of domain architecture, SPX spans 1 to 288 (MRFSHFLKYN…HLNTRTELIE (288 aa)). The next 12 helical transmembrane spans lie at 417–437 (IYFI…NDAA), 456–476 (AIPL…FKVL), 493–513 (ILAA…TLGE), 514–534 (VLAQ…FAGC), 539–559 (VLLM…NVAA), 581–601 (AQAL…SSPI), 663–683 (FTVK…LWCV), 691–711 (FGSS…TGLL), 718–738 (AFPW…KAVS), 758–778 (GVFA…TFVS), 805–825 (ILVF…SSGF), and 854–874 (ASIL…ASVV).

The protein belongs to the CitM (TC 2.A.11) transporter family.

The protein resides in the membrane. Its function is as follows. Low-affinity phosphate transporter involved in the control of cellular phosphate levels. The sequence is that of Low-affinity phosphate transporter PHO90 (PHO90) from Saccharomyces cerevisiae (strain ATCC 204508 / S288c) (Baker's yeast).